The sequence spans 1170 residues: Probable mRNA-capping enzyme (1170 aa).

Lys-292 serves as the catalytic N6-GMP-lysine intermediate. The region spanning 684–1007 (SNAAGMRAFN…LNRYYVFRKT (324 aa)) is the mRNA cap 0 methyltransferase domain. 693–694 (NN) contacts mRNA. S-adenosyl-L-methionine contacts are provided by residues Lys-697, Gly-715, Asp-737, and 813 to 815 (QFT).

This sequence in the N-terminal section; belongs to the dsDNA virus mRNA guanylyltransferase family. It in the C-terminal section; belongs to the class I-like SAM-binding methyltransferase superfamily. mRNA cap 0 methyltransferase family.

It localises to the virion. It carries out the reaction a 5'-end triphospho-ribonucleoside in mRNA + H2O = a 5'-end diphospho-ribonucleoside in mRNA + phosphate + H(+). The enzyme catalyses a 5'-end diphospho-ribonucleoside in mRNA + GTP + H(+) = a 5'-end (5'-triphosphoguanosine)-ribonucleoside in mRNA + diphosphate. The catalysed reaction is a 5'-end (5'-triphosphoguanosine)-ribonucleoside in mRNA + S-adenosyl-L-methionine = a 5'-end (N(7)-methyl 5'-triphosphoguanosine)-ribonucleoside in mRNA + S-adenosyl-L-homocysteine. The protein operates within mRNA processing; mRNA capping. Its function is as follows. Responsible for methylating the 5'-cap structure of mRNAs. This Acanthamoeba polyphaga mimivirus (APMV) protein is Probable mRNA-capping enzyme.